The sequence spans 415 residues: Chorismate synthase (415 aa).

The interval Glu-43–Gln-72 is disordered. NADP(+) is bound at residue Arg-48. Residues Arg-125 to Ser-127, Gly-304, His-319 to Ser-323, and Arg-346 contribute to the FMN site. A disordered region spans residues Thr-262–Asp-310. Residues Asp-298–Thr-307 are compositionally biased toward gly residues. Basic and acidic residues predominate over residues Pro-379 to Tyr-393. A disordered region spans residues Pro-379 to Asp-415.

Belongs to the chorismate synthase family. The cofactor is FMNH2.

The enzyme catalyses 5-O-(1-carboxyvinyl)-3-phosphoshikimate = chorismate + phosphate. It functions in the pathway metabolic intermediate biosynthesis; chorismate biosynthesis; chorismate from D-erythrose 4-phosphate and phosphoenolpyruvate: step 7/7. In terms of biological role, catalyzes the anti-1,4-elimination of the C-3 phosphate and the C-6 proR hydrogen from 5-enolpyruvylshikimate-3-phosphate (EPSP) to yield chorismate, which is the branch point compound that serves as the starting substrate for the three terminal pathways of aromatic amino acid biosynthesis. This reaction introduces a second double bond into the aromatic ring system. The sequence is that of Chorismate synthase from Halomicrobium mukohataei (strain ATCC 700874 / DSM 12286 / JCM 9738 / NCIMB 13541) (Haloarcula mukohataei).